Reading from the N-terminus, the 1388-residue chain is Kinesin-like protein KIF15 (1388 aa).

Positions methionine 1–aspartate 25 are disordered. Residues arginine 10–asparagine 22 show a composition bias toward polar residues. In terms of domain architecture, Kinesin motor spans alanine 26–isoleucine 363. Glycine 109–threonine 116 contacts ATP. Residues valine 368–serine 1388 are a coiled coil. Threonine 399 carries the phosphothreonine modification. A Phosphoserine modification is found at serine 568. The residue at position 1009 (lysine 1009) is an N6-acetyllysine. Phosphoserine is present on residues serine 1141 and serine 1169. Positions glutamine 1228 to isoleucine 1250 are disordered.

Belongs to the TRAFAC class myosin-kinesin ATPase superfamily. Kinesin family. KLP2 subfamily. Interacts with MKI67 and TPX2. Expressed in testis, colon, thymus and in breast cancer.

It localises to the cytoplasm. The protein resides in the cytoskeleton. It is found in the spindle. In terms of biological role, plus-end directed kinesin-like motor enzyme involved in mitotic spindle assembly. This chain is Kinesin-like protein KIF15 (KIF15), found in Homo sapiens (Human).